A 195-amino-acid polypeptide reads, in one-letter code: Oocyte-secreted protein 3 (195 aa).

Residues 1–21 (MKAFVASGLLLLIFGMWRCSG) form the signal peptide. N-linked (GlcNAc...) asparagine glycosylation is present at asparagine 102.

Belongs to the PLAC1 family. In terms of tissue distribution, oocyte-specific.

Its subcellular location is the secreted. This Mus musculus (Mouse) protein is Oocyte-secreted protein 3.